The sequence spans 101 residues: Citrinin resistance protein, mitochondrial (101 aa).

The protein localises to the mitochondrion. Mitochondrial protein that is involved in citrinin resistance. This chain is Citrinin resistance protein, mitochondrial, found in Saccharomyces cerevisiae (strain ATCC 204508 / S288c) (Baker's yeast).